The following is a 264-amino-acid chain: V-type proton ATPase subunit D (264 aa).

Basic and acidic residues predominate over residues Arg-214 to Gln-230. The segment at Arg-214 to Phe-264 is disordered. The span at Ala-255–Phe-264 shows a compositional bias: acidic residues.

This sequence belongs to the V-ATPase D subunit family. As to quaternary structure, V-ATPase is a heteromultimeric enzyme composed of a peripheral catalytic V1 complex (components A to H) attached to an integral membrane V0 proton pore complex (components: a, c, c', c'', d, e, f and VOA1).

Its subcellular location is the vacuole membrane. Its function is as follows. Subunit of the V1 complex of vacuolar(H+)-ATPase (V-ATPase), a multisubunit enzyme composed of a peripheral complex (V1) that hydrolyzes ATP and a membrane integral complex (V0) that translocates protons. V-ATPase is responsible for acidifying and maintaining the pH of intracellular compartments. The protein is V-type proton ATPase subunit D (vma-8) of Neurospora crassa (strain ATCC 24698 / 74-OR23-1A / CBS 708.71 / DSM 1257 / FGSC 987).